A 395-amino-acid chain; its full sequence is L-rhamnonate dehydratase (395 aa).

The substrate site is built by histidine 23 and arginine 49. Aspartate 215, glutamate 241, and glutamate 269 together coordinate Mg(2+). The active-site Proton acceptor is histidine 319. Residue glutamate 339 coordinates substrate.

The protein belongs to the mandelate racemase/muconate lactonizing enzyme family. RhamD subfamily. Homooctamer; tetramer of dimers. Mg(2+) serves as cofactor.

It catalyses the reaction L-rhamnonate = 2-dehydro-3-deoxy-L-rhamnonate + H2O. Functionally, catalyzes the dehydration of L-rhamnonate to 2-keto-3-deoxy-L-rhamnonate (KDR). The chain is L-rhamnonate dehydratase (rhmD) from Polaromonas sp. (strain JS666 / ATCC BAA-500).